The chain runs to 184 residues: ATP synthase subunit delta (184 aa).

This sequence belongs to the ATPase delta chain family. F-type ATPases have 2 components, F(1) - the catalytic core - and F(0) - the membrane proton channel. F(1) has five subunits: alpha(3), beta(3), gamma(1), delta(1), epsilon(1). F(0) has three main subunits: a(1), b(2) and c(10-14). The alpha and beta chains form an alternating ring which encloses part of the gamma chain. F(1) is attached to F(0) by a central stalk formed by the gamma and epsilon chains, while a peripheral stalk is formed by the delta and b chains.

The protein resides in the cell membrane. Functionally, f(1)F(0) ATP synthase produces ATP from ADP in the presence of a proton or sodium gradient. F-type ATPases consist of two structural domains, F(1) containing the extramembraneous catalytic core and F(0) containing the membrane proton channel, linked together by a central stalk and a peripheral stalk. During catalysis, ATP synthesis in the catalytic domain of F(1) is coupled via a rotary mechanism of the central stalk subunits to proton translocation. This protein is part of the stalk that links CF(0) to CF(1). It either transmits conformational changes from CF(0) to CF(1) or is implicated in proton conduction. The polypeptide is ATP synthase subunit delta (Christiangramia forsetii (strain DSM 17595 / CGMCC 1.15422 / KT0803) (Gramella forsetii)).